We begin with the raw amino-acid sequence, 352 residues long: 3-isopropylmalate dehydrogenase (352 aa).

Substrate-binding residues include Arg96, Arg106, Arg134, and Asp220. Asp220, Asp244, and Asp248 together coordinate Mg(2+). Position 277–289 (277–289 (GSAPDIAGKNLAN)) interacts with NAD(+).

This sequence belongs to the isocitrate and isopropylmalate dehydrogenases family. LeuB type 1 subfamily. As to quaternary structure, homodimer. The cofactor is Mg(2+). Requires Mn(2+) as cofactor.

The protein localises to the cytoplasm. It catalyses the reaction (2R,3S)-3-isopropylmalate + NAD(+) = 4-methyl-2-oxopentanoate + CO2 + NADH. It functions in the pathway amino-acid biosynthesis; L-leucine biosynthesis; L-leucine from 3-methyl-2-oxobutanoate: step 3/4. Functionally, catalyzes the oxidation of 3-carboxy-2-hydroxy-4-methylpentanoate (3-isopropylmalate) to 3-carboxy-4-methyl-2-oxopentanoate. The product decarboxylates to 4-methyl-2 oxopentanoate. This Desulfitobacterium hafniense (strain Y51) protein is 3-isopropylmalate dehydrogenase.